Here is a 283-residue protein sequence, read N- to C-terminus: Shikimate dehydrogenase (NADP(+)) (283 aa).

Residues 19–21 (SRS) and Thr66 contribute to the shikimate site. Lys70 acts as the Proton acceptor in catalysis. Position 82 (Glu82) interacts with NADP(+). Asn91 and Asp107 together coordinate shikimate. NADP(+)-binding positions include 133–137 (GAGGA) and Ile226. Tyr228 contributes to the shikimate binding site. Gly249 serves as a coordination point for NADP(+).

This sequence belongs to the shikimate dehydrogenase family. As to quaternary structure, homodimer.

It catalyses the reaction shikimate + NADP(+) = 3-dehydroshikimate + NADPH + H(+). Its pathway is metabolic intermediate biosynthesis; chorismate biosynthesis; chorismate from D-erythrose 4-phosphate and phosphoenolpyruvate: step 4/7. In terms of biological role, involved in the biosynthesis of the chorismate, which leads to the biosynthesis of aromatic amino acids. Catalyzes the reversible NADPH linked reduction of 3-dehydroshikimate (DHSA) to yield shikimate (SA). This is Shikimate dehydrogenase (NADP(+)) from Rhodospirillum rubrum (strain ATCC 11170 / ATH 1.1.1 / DSM 467 / LMG 4362 / NCIMB 8255 / S1).